The chain runs to 452 residues: Phosphoglucosamine mutase (452 aa).

Residue Ser101 is the Phosphoserine intermediate of the active site. The Mg(2+) site is built by Ser101, Asp241, Asp243, and Asp245. Ser101 bears the Phosphoserine mark.

The protein belongs to the phosphohexose mutase family. Requires Mg(2+) as cofactor. Activated by phosphorylation.

The catalysed reaction is alpha-D-glucosamine 1-phosphate = D-glucosamine 6-phosphate. Functionally, catalyzes the conversion of glucosamine-6-phosphate to glucosamine-1-phosphate. The sequence is that of Phosphoglucosamine mutase from Lactococcus lactis subsp. cremoris (strain MG1363).